A 466-amino-acid polypeptide reads, in one-letter code: Soluble pyridine nucleotide transhydrogenase (466 aa).

Residue 36–45 coordinates FAD; it reads ERYQNVGGGC.

It belongs to the class-I pyridine nucleotide-disulfide oxidoreductase family. It depends on FAD as a cofactor.

It is found in the cytoplasm. It carries out the reaction NAD(+) + NADPH = NADH + NADP(+). Conversion of NADPH, generated by peripheral catabolic pathways, to NADH, which can enter the respiratory chain for energy generation. This is Soluble pyridine nucleotide transhydrogenase from Escherichia coli O81 (strain ED1a).